The primary structure comprises 80 residues: Conotoxin Cl9.5 (80 aa).

Positions 1–23 are cleaved as a signal peptide; it reads MNCYLILTVALLLTSAMTGTTTA. A propeptide spanning residues 24-37 is cleaved from the precursor; the sequence is GQLNTKGVTLREDD. Disulfide bonds link Cys42–Cys59, Cys47–Cys69, and Cys49–Cys74.

Expressed by the venom duct.

The protein localises to the secreted. This is Conotoxin Cl9.5 from Californiconus californicus (California cone).